Here is a 542-residue protein sequence, read N- to C-terminus: Organic anion transporter 3 (542 aa).

Over 1 to 20 the chain is Cytoplasmic; the sequence is MTFSEILDRVGSMGRFQFLH. The residue at position 4 (S4) is a Phosphoserine. A helical transmembrane segment spans residues 21 to 41; sequence VAILGLPILNMANHNLLQIFT. The Extracellular portion of the chain corresponds to 42 to 123; it reads AATPVHHCRP…LVCNSNKLKE (82 aa). N-linked (GlcNAc...) asparagine glycosylation is present at N86. Residues 124–144 form a helical membrane-spanning segment; that stretch reads MAQSIFMAGILIGGLVLGDLS. Residues 145–154 lie on the Cytoplasmic side of the membrane; sequence DRFGRRPILT. Residues 155–175 traverse the membrane as a helical segment; the sequence is CSYLLLAASGSGAAFSPTFPI. Y176 is a topological domain (extracellular). A helical membrane pass occupies residues 177 to 197; that stretch reads MVFRFLCGFGISGITLSTVIL. Over 198–212 the chain is Cytoplasmic; sequence NVEWVPTRMRAIMST. Residues 213–233 traverse the membrane as a helical segment; the sequence is ALGYCYTFGQFILPGLAYAIP. Topologically, residues 234 to 236 are extracellular; the sequence is QWR. Residues 237–257 traverse the membrane as a helical segment; the sequence is WLQLTVSIPFFIFFLSSWWTP. Topologically, residues 258–327 are cytoplasmic; sequence ESIRWLVLSG…FRIPMLRRMT (70 aa). The helical transmembrane segment at 328–348 threads the bilayer; sequence FCLSLAWFATGFAYYSLAMGV. Residues 349 to 354 lie on the Extracellular side of the membrane; that stretch reads EEFGVN. Residues 355-375 form a helical membrane-spanning segment; that stretch reads LYILQIIFGGVDVPAKFITIL. The Cytoplasmic segment spans residues 376–386; it reads SLSYLGRHTTQ. A helical transmembrane segment spans residues 387–407; that stretch reads AAALLLAGGAILALTFVPLDL. At 408–471 the chain is on the extracellular side; it reads QTVRTVLAVF…LVKITGEVQP (64 aa). A helical transmembrane segment spans residues 472 to 492; that stretch reads FIPNIIYGITALLGGSAAFFL. Over 493–542 the chain is Cytoplasmic; it reads PETLNQPLPETIEDLENWSLRAKKPKQEPEVEKASQRIPLQPHGPGLGSS. A disordered region spans residues 515–542; that stretch reads KKPKQEPEVEKASQRIPLQPHGPGLGSS. Basic and acidic residues predominate over residues 517–527; it reads PKQEPEVEKAS.

The protein belongs to the major facilitator (TC 2.A.1) superfamily. Organic cation transporter (TC 2.A.1.19) family.

The protein resides in the basolateral cell membrane. The catalysed reaction is estrone 3-sulfate(out) + glutarate(in) = estrone 3-sulfate(in) + glutarate(out). It carries out the reaction estrone 3-sulfate(in) + 2-oxoglutarate(out) = estrone 3-sulfate(out) + 2-oxoglutarate(in). The enzyme catalyses glutarate(in) + 2-oxoglutarate(out) = glutarate(out) + 2-oxoglutarate(in). It catalyses the reaction urate(in) + 2-oxoglutarate(out) = urate(out) + 2-oxoglutarate(in). The catalysed reaction is taurocholate(out) + glutarate(in) = taurocholate(in) + glutarate(out). It carries out the reaction dehydroepiandrosterone 3-sulfate(out) + glutarate(in) = dehydroepiandrosterone 3-sulfate(in) + glutarate(out). The enzyme catalyses prostaglandin F2alpha(out) + glutarate(in) = prostaglandin F2alpha(in) + glutarate(out). It catalyses the reaction prostaglandin F2alpha(out) + 2-oxoglutarate(in) = prostaglandin F2alpha(in) + 2-oxoglutarate(out). The catalysed reaction is (R)-carnitine(out) + 2-oxoglutarate(in) = (R)-carnitine(in) + 2-oxoglutarate(out). It carries out the reaction glutarate(in) + (R)-carnitine(out) = glutarate(out) + (R)-carnitine(in). The enzyme catalyses prostaglandin E2(out) + 2-oxoglutarate(in) = prostaglandin E2(in) + 2-oxoglutarate(out). It catalyses the reaction prostaglandin E2(out) + glutarate(in) = prostaglandin E2(in) + glutarate(out). The catalysed reaction is urate(in) + glutarate(out) = urate(out) + glutarate(in). It carries out the reaction taurocholate(out) + 2-oxoglutarate(in) = taurocholate(in) + 2-oxoglutarate(out). The enzyme catalyses dehydroepiandrosterone 3-sulfate(out) + 2-oxoglutarate(in) = dehydroepiandrosterone 3-sulfate(in) + 2-oxoglutarate(out). It catalyses the reaction kynurenate(out) + a dicarboxylate(in) = kynurenate(in) + a dicarboxylate(out). The catalysed reaction is (indol-3-yl)acetate(out) + a dicarboxylate(in) = (indol-3-yl)acetate(in) + a dicarboxylate(out). It carries out the reaction indoxyl sulfate(out) + a dicarboxylate(in) = indoxyl sulfate(in) + a dicarboxylate(out). The enzyme catalyses N-benzoylglycine(out) + a dicarboxylate(in) = N-benzoylglycine(in) + a dicarboxylate(out). It catalyses the reaction 3-carboxy-4-methyl-5-propyl-2-furanpropanoate(out) + a dicarboxylate(in) = 3-carboxy-4-methyl-5-propyl-2-furanpropanoate(in) + a dicarboxylate(out). The catalysed reaction is (6R)-L-erythro-5,6,7,8-tetrahydrobiopterin(out) + a dicarboxylate(in) = (6R)-L-erythro-5,6,7,8-tetrahydrobiopterin(in) + a dicarboxylate(out). It carries out the reaction L-erythro-7,8-dihydrobiopterin(out) + a dicarboxylate(in) = L-erythro-7,8-dihydrobiopterin(in) + a dicarboxylate(out). The enzyme catalyses L-sepiapterin(out) + a dicarboxylate(in) = L-sepiapterin(in) + a dicarboxylate(out). Functions as an organic anion/dicarboxylate exchanger that couples organic anion uptake indirectly to the sodium gradient. Transports organic anions such as estrone 3-sulfate (E1S) and urate in exchange for dicarboxylates such as glutarate or ketoglutarate (2-oxoglutarate). Plays an important role in the excretion of endogenous and exogenous organic anions, especially from the kidney and the brain. E1S transport is pH- and chloride-dependent and may also involve E1S/cGMP exchange. Responsible for the transport of prostaglandin E2 (PGE2) and prostaglandin F2(alpha) (PGF2(alpha)) in the basolateral side of the renal tubule. Involved in the transport of neuroactive tryptophan metabolites kynurenate and xanthurenate. Functions as a biopterin transporters involved in the uptake and the secretion of coenzymes tetrahydrobiopterin (BH4), dihydrobiopterin (BH2) and sepiapterin to urine, thereby determining baseline levels of blood biopterins. May be involved in the basolateral transport of steviol, a metabolite of the popular sugar substitute stevioside. May participate in the detoxification/ renal excretion of drugs and xenobiotics, such as the histamine H(2)-receptor antagonists fexofenadine and cimetidine, the antibiotic benzylpenicillin (PCG), the anionic herbicide 2,4-dichloro-phenoxyacetate (2,4-D), the diagnostic agent p-aminohippurate (PAH), the antiviral acyclovir (ACV), and the mycotoxin ochratoxin (OTA), by transporting these exogenous organic anions across the cell membrane in exchange for dicarboxylates such as 2-oxoglutarate. Contributes to the renal uptake of potent uremic toxins (indoxyl sulfate (IS), indole acetate (IA), hippurate/N-benzoylglycine (HA) and 3-carboxy-4-methyl-5-propyl-2-furanpropionate (CMPF)), pravastatin, PCG, E1S and dehydroepiandrosterone sulfate (DHEAS), and is partly involved in the renal uptake of temocaprilat (an angiotensin-converting enzyme (ACE) inhibitor). May contribute to the release of cortisol in the adrenals. Involved in one of the detoxification systems on the choroid plexus (CP), removes substrates such as E1S or taurocholate (TC), PCG, 2,4-D and PAH, from the cerebrospinal fluid (CSF) to the blood for eventual excretion in urine and bile. Also contributes to the uptake of several other organic compounds such as the prostanoids prostaglandin E(2) and prostaglandin F(2-alpha), L-carnitine, and the therapeutic drugs allopurinol, 6-mercaptopurine (6-MP) and 5-fluorouracil (5-FU). Mediates the transport of PAH, PCG, and the statins pravastatin and pitavastatin, from the cerebrum into the blood circulation across the blood-brain barrier (BBB). In summary, plays a role in the efflux of drugs and xenobiotics, helping reduce their undesired toxicological effects on the body. This Pongo abelii (Sumatran orangutan) protein is Organic anion transporter 3 (SLC22A8).